We begin with the raw amino-acid sequence, 497 residues long: Serine/threonine-protein phosphatase 2A 56 kDa regulatory subunit beta isoform (497 aa).

Positions 1–19 (METKLPPASTPTSPSSPGL) are enriched in low complexity. Disordered regions lie at residues 1-55 (METK…YQSN) and 473-497 (QGTQ…GGQS). Residues Ser32, Ser35, Ser44, Ser46, Ser47, and Ser48 each carry the phosphoserine modification. Over residues 34–45 (RSLRRARPRRSH) the composition is skewed to basic residues.

It belongs to the phosphatase 2A regulatory subunit B56 family. As to quaternary structure, component of the serine/threonine-protein phosphatase 2A complex (PP2A). This complex consists of a common heterodimeric core enzyme, composed of a 36 kDa catalytic subunit (subunit C) and a 65 kDa constant scaffold subunit (PR65 or subunit A), that associates with a variety of regulatory subunits. Proteins that associate with the core dimer include three families of regulatory subunits B (the R2/B/PR55/B55, R3/B''/PR72/PR130/PR59 and R5/B'/B56 families), the 48 kDa variable regulatory subunit, viral proteins, and cell signaling molecules. Interacts with SGO1. Interacts with AKT1. In terms of processing, ubiquitinated by CUL3-KLHL15 complex; this modification leads to proteasomal degradation.

Its subcellular location is the cytoplasm. In terms of biological role, as the regulatory component of the serine/threonine-protein phosphatase 2A (PP2A) holoenzyme, modulates substrate specificity, subcellular localization, and responsiveness to phosphorylation. The phosphorylated form mediates the interaction between PP2A and AKT1, leading to AKT1 dephosphorylation. This Mus musculus (Mouse) protein is Serine/threonine-protein phosphatase 2A 56 kDa regulatory subunit beta isoform (Ppp2r5b).